A 404-amino-acid chain; its full sequence is Putative arginine deiminase (404 aa).

Residue Cys-394 is the Amidino-cysteine intermediate of the active site.

The protein belongs to the arginine deiminase family.

The protein resides in the cytoplasm. It catalyses the reaction L-arginine + H2O = L-citrulline + NH4(+). The protein operates within amino-acid degradation; L-arginine degradation via ADI pathway; carbamoyl phosphate from L-arginine: step 1/2. This chain is Putative arginine deiminase (arcA), found in Mycoplasma pneumoniae (strain ATCC 29342 / M129 / Subtype 1) (Mycoplasmoides pneumoniae).